We begin with the raw amino-acid sequence, 137 residues long: Chaperone protein YscB (137 aa).

As to quaternary structure, interacts with SycN to form a complex which specifically binds to YopN.

Its subcellular location is the cytoplasm. It localises to the cell inner membrane. Functionally, functions as a specific chaperone for YopN. It could facilitate the secretion and the subsequent translocation of YopN. The chain is Chaperone protein YscB (yscB) from Yersinia enterocolitica serotype O:8 / biotype 1B (strain NCTC 13174 / 8081).